The primary structure comprises 355 residues: Uroporphyrinogen decarboxylase (355 aa).

Substrate contacts are provided by residues 36–40 (RQAGR), Asp85, Tyr160, Ser215, and His334.

The protein belongs to the uroporphyrinogen decarboxylase family. Homodimer.

It localises to the cytoplasm. The enzyme catalyses uroporphyrinogen III + 4 H(+) = coproporphyrinogen III + 4 CO2. The protein operates within porphyrin-containing compound metabolism; protoporphyrin-IX biosynthesis; coproporphyrinogen-III from 5-aminolevulinate: step 4/4. Catalyzes the decarboxylation of four acetate groups of uroporphyrinogen-III to yield coproporphyrinogen-III. The sequence is that of Uroporphyrinogen decarboxylase from Rhodococcus jostii (strain RHA1).